A 75-amino-acid polypeptide reads, in one-letter code: UPF0270 protein PSEEN1465 (75 aa).

Belongs to the UPF0270 family.

This chain is UPF0270 protein PSEEN1465, found in Pseudomonas entomophila (strain L48).